The sequence spans 130 residues: Small ribosomal subunit protein uS8A (130 aa).

This sequence belongs to the universal ribosomal protein uS8 family.

The chain is Small ribosomal subunit protein uS8A (RpS15Aa) from Drosophila melanogaster (Fruit fly).